Reading from the N-terminus, the 217-residue chain is Frizzled-8 (217 aa).

Residues 1 to 26 (AGAAELQPELAVAEHVRYESTGPALC) lie on the Extracellular side of the membrane. A helical membrane pass occupies residues 27 to 47 (TVVFLLVYFFGMASSIWWVIL). Residues 48–69 (SLTWFLAAGMKWGNEAIAGYAQ) lie on the Cytoplasmic side of the membrane. A helical membrane pass occupies residues 70 to 90 (YFHLAAWLLPSVKSIAVLALS). The Extracellular portion of the chain corresponds to 91–113 (SVDGDPVAGICYVGNQSLENLRG). Asn-105 is a glycosylation site (N-linked (GlcNAc...) asparagine). The helical transmembrane segment at 114–134 (FVLAPLVVYLFTGSLFLLAGF) threads the bilayer. Over 135–160 (VSLFRIRSVIKQGGTKTDKLEKLMIR) the chain is Cytoplasmic. A helical membrane pass occupies residues 161–181 (IGIFTVLYTVPATIVIACYIY). The Extracellular segment spans residues 182-209 (EQHNREAWEQAQNCSCPGDPHRPKPDYA). The N-linked (GlcNAc...) asparagine glycan is linked to Asn-194. Residues 210 to 217 (VFMLKYFM) traverse the membrane as a helical segment.

The protein belongs to the G-protein coupled receptor Fz/Smo family.

The protein localises to the membrane. It localises to the cell membrane. In terms of biological role, receptor for Wnt proteins. Most of frizzled receptors are coupled to the beta-catenin canonical signaling pathway, which leads to the activation of disheveled proteins, inhibition of GSK-3 kinase, nuclear accumulation of beta-catenin and activation of Wnt target genes. A second signaling pathway involving PKC and calcium fluxes has been seen for some family members, but it is not yet clear if it represents a distinct pathway or if it can be integrated in the canonical pathway, as PKC seems to be required for Wnt-mediated inactivation of GSK-3 kinase. Both pathways seem to involve interactions with G-proteins. May be involved in transduction and intercellular transmission of polarity information during tissue morphogenesis and/or in differentiated tissues. The sequence is that of Frizzled-8 (FZD8) from Gallus gallus (Chicken).